The following is a 438-amino-acid chain: Ribosomal protein uS12 methylthiotransferase RimO (438 aa).

Residues 6–118 (KQLCLISLGC…IDILIAKKQN (113 aa)) enclose the MTTase N-terminal domain. Residues C15, C49, C81, C150, C154, and C157 each contribute to the [4Fe-4S] cluster site. Residues 136-364 (TGSSVHAYVK…NKIALKHQHN (229 aa)) enclose the Radical SAM core domain.

It belongs to the methylthiotransferase family. RimO subfamily. [4Fe-4S] cluster is required as a cofactor.

The protein resides in the cytoplasm. It catalyses the reaction L-aspartate(89)-[ribosomal protein uS12]-hydrogen + (sulfur carrier)-SH + AH2 + 2 S-adenosyl-L-methionine = 3-methylsulfanyl-L-aspartate(89)-[ribosomal protein uS12]-hydrogen + (sulfur carrier)-H + 5'-deoxyadenosine + L-methionine + A + S-adenosyl-L-homocysteine + 2 H(+). Its function is as follows. Catalyzes the methylthiolation of an aspartic acid residue of ribosomal protein uS12. The polypeptide is Ribosomal protein uS12 methylthiotransferase RimO (Helicobacter acinonychis (strain Sheeba)).